We begin with the raw amino-acid sequence, 485 residues long: Glutamate mutase epsilon subunit (485 aa).

Position 66 (Arg66) interacts with L-glutamate. Gly68 serves as a coordination point for adenosylcob(III)alamin. Arg100 serves as a coordination point for L-glutamate. Asn123 is an adenosylcob(III)alamin binding site. Residues 149–150 (RH), Glu171, and Tyr177 contribute to the L-glutamate site. Residue Pro180 coordinates adenosylcob(III)alamin. Tyr181 is a binding site for L-glutamate. Phe297, Lys326, Glu330, and Ile334 together coordinate adenosylcob(III)alamin.

Belongs to the methylaspartate mutase GlmE subunit family. As to quaternary structure, heterotetramer composed of 2 epsilon subunits (GlmE) and 2 sigma subunits (GlmS). GlmE exists as a homodimer and GlmS as a monomer. The cofactor is adenosylcob(III)alamin.

It catalyses the reaction (2S,3S)-3-methyl-L-aspartate = L-glutamate. It functions in the pathway amino-acid degradation; L-glutamate degradation via mesaconate pathway; acetate and pyruvate from L-glutamate: step 1/4. Its function is as follows. Catalyzes the carbon skeleton rearrangement of L-glutamate to L-threo-3-methylaspartate ((2S,3S)-3-methylaspartate). This is Glutamate mutase epsilon subunit from Treponema denticola (strain ATCC 35405 / DSM 14222 / CIP 103919 / JCM 8153 / KCTC 15104).